The following is a 616-amino-acid chain: Dihydroxy-acid dehydratase (616 aa).

Position 81 (Asp81) interacts with Mg(2+). Cys122 contributes to the [2Fe-2S] cluster binding site. Positions 123 and 124 each coordinate Mg(2+). Lys124 is modified (N6-carboxylysine). [2Fe-2S] cluster is bound at residue Cys195. Glu491 lines the Mg(2+) pocket. Ser517 acts as the Proton acceptor in catalysis.

Belongs to the IlvD/Edd family. As to quaternary structure, homodimer. Requires [2Fe-2S] cluster as cofactor. Mg(2+) is required as a cofactor.

It carries out the reaction (2R)-2,3-dihydroxy-3-methylbutanoate = 3-methyl-2-oxobutanoate + H2O. It catalyses the reaction (2R,3R)-2,3-dihydroxy-3-methylpentanoate = (S)-3-methyl-2-oxopentanoate + H2O. It participates in amino-acid biosynthesis; L-isoleucine biosynthesis; L-isoleucine from 2-oxobutanoate: step 3/4. The protein operates within amino-acid biosynthesis; L-valine biosynthesis; L-valine from pyruvate: step 3/4. In terms of biological role, functions in the biosynthesis of branched-chain amino acids. Catalyzes the dehydration of (2R,3R)-2,3-dihydroxy-3-methylpentanoate (2,3-dihydroxy-3-methylvalerate) into 2-oxo-3-methylpentanoate (2-oxo-3-methylvalerate) and of (2R)-2,3-dihydroxy-3-methylbutanoate (2,3-dihydroxyisovalerate) into 2-oxo-3-methylbutanoate (2-oxoisovalerate), the penultimate precursor to L-isoleucine and L-valine, respectively. This chain is Dihydroxy-acid dehydratase, found in Escherichia coli O17:K52:H18 (strain UMN026 / ExPEC).